The following is a 1240-amino-acid chain: DNA polymerase II large subunit (1240 aa).

Belongs to the archaeal DNA polymerase II family. As to quaternary structure, heterodimer of a large subunit and a small subunit.

The enzyme catalyses DNA(n) + a 2'-deoxyribonucleoside 5'-triphosphate = DNA(n+1) + diphosphate. It catalyses the reaction Exonucleolytic cleavage in the 3'- to 5'-direction to yield nucleoside 5'-phosphates.. Its function is as follows. Possesses two activities: a DNA synthesis (polymerase) and an exonucleolytic activity that degrades single-stranded DNA in the 3'- to 5'-direction. Has a template-primer preference which is characteristic of a replicative DNA polymerase. The protein is DNA polymerase II large subunit of Methanopyrus kandleri (strain AV19 / DSM 6324 / JCM 9639 / NBRC 100938).